The sequence spans 601 residues: A-type ATP synthase subunit A (601 aa).

236–243 (GPFGSGKT) serves as a coordination point for ATP.

Belongs to the ATPase alpha/beta chains family. Has multiple subunits with at least A(3), B(3), C, D, E, F, H, I and proteolipid K(x).

It localises to the cell membrane. The catalysed reaction is ATP + H2O + 4 H(+)(in) = ADP + phosphate + 5 H(+)(out). In terms of biological role, component of the A-type ATP synthase that produces ATP from ADP in the presence of a proton gradient across the membrane. The A chain is the catalytic subunit. The sequence is that of A-type ATP synthase subunit A from Hyperthermus butylicus (strain DSM 5456 / JCM 9403 / PLM1-5).